The chain runs to 166 residues: uncharacterized protein (166 aa).

The 63-residue stretch at 3–65 folds into the HTH asnC-type domain; sequence LTEKETEILE…IDWRKVDGHE (63 aa). The H-T-H motif DNA-binding region spans 22–41; the sequence is LETIAKMAGIPVNEVKTIID.

This is an uncharacterized protein from Bacillus subtilis (strain 168).